A 173-amino-acid chain; its full sequence is Alpha-crystallin A chain (173 aa).

An N-acetylmethionine modification is found at Met1. Residues Leu52–Ser162 enclose the sHSP domain. 4 residues coordinate Zn(2+): His100, Glu102, His107, and His154. The interval Pro144–Ser173 is disordered. Over residues Ser153–Pro167 the composition is skewed to basic and acidic residues. Residue Ser162 is glycosylated (O-linked (GlcNAc) serine).

Belongs to the small heat shock protein (HSP20) family. Heteropolymer composed of three CRYAA and one CRYAB subunits. Inter-subunit bridging via zinc ions enhances stability, which is crucial as there is no protein turn over in the lens. Can also form homodimers and homotetramers (dimers of dimers) which serve as the building blocks of homooligomers. Within homooligomers, the zinc-binding motif is created from residues of 3 different molecules. His-100 and Glu-102 from one molecule are ligands of the zinc ion, and His-107 and His-154 residues from additional molecules complete the site with tetrahedral coordination geometry.

It localises to the cytoplasm. Its subcellular location is the nucleus. Functionally, contributes to the transparency and refractive index of the lens. May act as a chaperone, preventing aggregation of various proteins under a wide range of stress conditions. This is Alpha-crystallin A chain (CRYAA) from Tupinambis teguixin (Golden tegu).